Here is a 169-residue protein sequence, read N- to C-terminus: Disulfide bond formation protein B 1 (169 aa).

The Cytoplasmic segment spans residues 1–14; sequence MSDDRLGLGRERRF. The chain crosses the membrane as a helical span at residues 15 to 31; sequence LVLLGIICLALIGGALY. Residues 32-49 are Periplasmic-facing; it reads MQVVLGEAPCPLCILQRY. C41 and C44 are disulfide-bonded. The chain crosses the membrane as a helical span at residues 50-64; the sequence is ALLLIALFAFIGAAM. The Cytoplasmic portion of the chain corresponds to 65 to 71; that stretch reads SSRRGVT. The chain crosses the membrane as a helical span at residues 72-89; that stretch reads VMETLVVICALAGAGVAG. The Periplasmic segment spans residues 90–144; that stretch reads HHVYTQFYPSVSCGIDVLQPIVDSLPLAKIFPLGFQVDGFCSTPYPPILGLSLAQ. A disulfide bridge links C102 with C130. The helical transmembrane segment at 145–163 threads the bilayer; sequence WALVAFVLTVILVPLGVVR. Topologically, residues 164-169 are cytoplasmic; that stretch reads NRKKTY.

The protein belongs to the DsbB family.

The protein resides in the cell inner membrane. Required for disulfide bond formation in some periplasmic proteins. Acts by oxidizing the DsbA protein. The sequence is that of Disulfide bond formation protein B 1 from Pseudomonas fluorescens (strain ATCC BAA-477 / NRRL B-23932 / Pf-5).